We begin with the raw amino-acid sequence, 249 residues long: Triosephosphate isomerase (249 aa).

Residue 9-11 (NWK) coordinates substrate. Catalysis depends on His95, which acts as the Electrophile. Glu167 (proton acceptor) is an active-site residue. Substrate-binding positions include Gly173, Ser213, and 234–235 (GG).

The protein belongs to the triosephosphate isomerase family. As to quaternary structure, homodimer.

It is found in the cytoplasm. The catalysed reaction is D-glyceraldehyde 3-phosphate = dihydroxyacetone phosphate. It participates in carbohydrate biosynthesis; gluconeogenesis. The protein operates within carbohydrate degradation; glycolysis; D-glyceraldehyde 3-phosphate from glycerone phosphate: step 1/1. In terms of biological role, involved in the gluconeogenesis. Catalyzes stereospecifically the conversion of dihydroxyacetone phosphate (DHAP) to D-glyceraldehyde-3-phosphate (G3P). This is Triosephosphate isomerase from Dictyoglomus turgidum (strain DSM 6724 / Z-1310).